Reading from the N-terminus, the 238-residue chain is ATP synthase subunit a (238 aa).

A run of 6 helical transmembrane segments spans residues 18-38 (TTNLISGLVSALIVFCVVFAL), 76-96 (FGLYAFTLFLFIFVSNQIGLF), 114-134 (PIVTLTLSLITMMLAHYSGVA), 150-170 (FKVWLPIGVFTEFIDFLTLGL), 188-208 (GIAFSGGIVNMIVAIPLALIW), and 211-231 (FSVFLGSIQAFVFVTLTSVYI).

Belongs to the ATPase A chain family. In terms of assembly, F-type ATPases have 2 components, CF(1) - the catalytic core - and CF(0) - the membrane proton channel. CF(1) has five subunits: alpha(3), beta(3), gamma(1), delta(1), epsilon(1). CF(0) has three main subunits: a(1), b(2) and c(9-12). The alpha and beta chains form an alternating ring which encloses part of the gamma chain. CF(1) is attached to CF(0) by a central stalk formed by the gamma and epsilon chains, while a peripheral stalk is formed by the delta and b chains.

It is found in the cell membrane. Its function is as follows. Key component of the proton channel; it plays a direct role in the translocation of protons across the membrane. The sequence is that of ATP synthase subunit a from Pediococcus pentosaceus (strain ATCC 25745 / CCUG 21536 / LMG 10740 / 183-1w).